Reading from the N-terminus, the 2212-residue chain is RNA-directed RNA polymerase L (2212 aa).

The tract at residues 30 to 288 (KDALLSQVHP…SHEENDSLDC (259 aa)) is endonuclease. Residues Glu-55, Asp-93, and Glu-106 each coordinate Mn(2+). Lys-119 is a catalytic residue. The tract at residues 922 to 942 (MKSSDAREERLQDPKRNEKNA) is disordered. The span at 923–942 (KSSDAREERLQDPKRNEKNA) shows a compositional bias: basic and acidic residues. A RdRp catalytic domain is found at 1175 to 1371 (CDMKMAVNNG…YLSSKLNKFV (197 aa)). Asp-1333 is a binding site for Mg(2+).

It belongs to the Bunyavirales RNA polymerase family. In terms of assembly, homomultimer; the oligomeric structure is essential for the polymerase activity. Interacts with nucleoprotein N. Interacts with protein Z; this interaction inhibits viral transcription and replication, Z partially blocks the product exit tunnel for the releasing nascent RNA product. The cofactor is Mn(2+). Mg(2+) is required as a cofactor.

It localises to the virion. The protein resides in the host cytoplasm. The enzyme catalyses RNA(n) + a ribonucleoside 5'-triphosphate = RNA(n+1) + diphosphate. In terms of biological role, RNA-dependent RNA polymerase, which is responsible for the replication and transcription of the viral RNA genome using antigenomic RNA as an intermediate. During transcription, synthesizes subgenomic RNAs and assures their capping by a cap-snatching mechanism, which involves the endonuclease activity cleaving the host capped pre-mRNAs. These short capped RNAs are then used as primers for viral transcription. The 3'-end of subgenomic mRNAs molecules are heterogeneous and not polyadenylated. The replicase function is to direct synthesis of antigenomic and genomic RNA which are encapsidated and non capped. As a consequence of the use of the same enzyme for both transcription and replication, these mechanisms need to be well coordinated. These processes may be regulated by proteins N and Z in a dose-dependent manner. Z protein inhibits the viral polymerase L und thus the viral transcription and RNA synthesis. The protein is RNA-directed RNA polymerase L of Sabia mammarenavirus (isolate Human/Brasil/SPH114202/1990) (SABV).